The chain runs to 454 residues: Cobyrinate a,c-diamide synthase (454 aa).

Residues 247–442 enclose the GATase cobBQ-type domain; that stretch reads KIGIAMDSAF…IHAHWASNPN (196 aa). Cysteine 329 acts as the Nucleophile in catalysis.

Belongs to the CobB/CbiA family. Requires Mg(2+) as cofactor.

It catalyses the reaction cob(II)yrinate + 2 L-glutamine + 2 ATP + 2 H2O = cob(II)yrinate a,c diamide + 2 L-glutamate + 2 ADP + 2 phosphate + 2 H(+). The protein operates within cofactor biosynthesis; adenosylcobalamin biosynthesis; cob(II)yrinate a,c-diamide from sirohydrochlorin (anaerobic route): step 10/10. Functionally, catalyzes the ATP-dependent amidation of the two carboxylate groups at positions a and c of cobyrinate, using either L-glutamine or ammonia as the nitrogen source. The protein is Cobyrinate a,c-diamide synthase of Leptospira interrogans serogroup Icterohaemorrhagiae serovar copenhageni (strain Fiocruz L1-130).